The sequence spans 517 residues: Protein disulfide isomerase-like 1-2 (517 aa).

An N-terminal signal peptide occupies residues 1–23; sequence MAVNLVLSFALAILISSSPTAVG. The 120-residue stretch at 24–143 folds into the Thioredoxin 1 domain; that stretch reads VDATEELKEA…IVEYLKRQVG (120 aa). Asn-41 carries N-linked (GlcNAc...) asparagine glycosylation. Catalysis depends on nucleophile residues Cys-61 and Cys-64. An intrachain disulfide couples Cys-61 to Cys-64. The N-linked (GlcNAc...) asparagine glycan is linked to Asn-301. Residues 357-484 enclose the Thioredoxin 2 domain; that stretch reads VEYGNLTPYV…IISFINENRG (128 aa). Active-site nucleophile residues include Cys-407 and Cys-410. Cys-407 and Cys-410 form a disulfide bridge. Positions 514–517 match the Prevents secretion from ER motif; that stretch reads KDEL.

This sequence belongs to the protein disulfide isomerase family.

It is found in the endoplasmic reticulum lumen. The enzyme catalyses Catalyzes the rearrangement of -S-S- bonds in proteins.. In terms of biological role, acts as a protein-folding catalyst that interacts with nascent polypeptides to catalyze the formation, isomerization, and reduction or oxidation of disulfide bonds. May play a role in storage protein biogenesis. This is Protein disulfide isomerase-like 1-2 (PDIL1-2) from Oryza sativa subsp. japonica (Rice).